Here is a 195-residue protein sequence, read N- to C-terminus: Exosome complex component CSL4 (195 aa).

S21 carries the post-translational modification Phosphoserine. The S1 motif domain occupies 66-147; that stretch reads DVGAVVTCKV…AQSNYLLTTA (82 aa).

Belongs to the CSL4 family. Component of the RNA exosome core complex (Exo-9), composed of EXOSC1, EXOSC2, EXOSC3, EXOSC4, EXOSC5, EXOSC6, EXOSC7, EXOSC8 and EXOSC9; within the complex interacts with EXOSC6. The catalytically inactive RNA exosome core complex (Exo-9) associates with the catalytic subunit EXOSC10/RRP6. Exo-9 may associate with DIS3 to form the nucleolar exosome complex, or DIS3L to form the cytoplasmic exosome complex. Exo-9 is formed by a hexameric base ring consisting of the heterodimers EXOSC4-EXOSC9, EXOSC5-EXOSC8 and EXOSC6-EXOSC7, and a cap ring consisting of EXOSC1, EXOSC2 and EXOSC3. The RNA exosome complex associates with cofactors C1D/RRP47, MPHOSPH6/MPP6 and MTREX/MTR4. Interacts with DDX60.

It localises to the nucleus. The protein localises to the nucleolus. Its subcellular location is the cytoplasm. Its function is as follows. Non-catalytic component of the RNA exosome complex which has 3'-&gt;5' exoribonuclease activity and participates in a multitude of cellular RNA processing and degradation events. In the nucleus, the RNA exosome complex is involved in proper maturation of stable RNA species such as rRNA, snRNA and snoRNA, in the elimination of RNA processing by-products and non-coding 'pervasive' transcripts, such as antisense RNA species and promoter-upstream transcripts (PROMPTs), and of mRNAs with processing defects, thereby limiting or excluding their export to the cytoplasm. The RNA exosome may be involved in Ig class switch recombination (CSR) and/or Ig variable region somatic hypermutation (SHM) by targeting AICDA deamination activity to transcribed dsDNA substrates. In the cytoplasm, the RNA exosome complex is involved in general mRNA turnover and specifically degrades inherently unstable mRNAs containing AU-rich elements (AREs) within their 3' untranslated regions, and in RNA surveillance pathways, preventing translation of aberrant mRNAs. It seems to be involved in degradation of histone mRNA. The catalytic inactive RNA exosome core complex of 9 subunits (Exo-9) is proposed to play a pivotal role in the binding and presentation of RNA for ribonucleolysis, and to serve as a scaffold for the association with catalytic subunits and accessory proteins or complexes. EXOSC1 as peripheral part of the Exo-9 complex stabilizes the hexameric ring of RNase PH-domain subunits through contacts with EXOSC6 and EXOSC8. The polypeptide is Exosome complex component CSL4 (Exosc1) (Mus musculus (Mouse)).